Consider the following 238-residue polypeptide: Probable transcriptional regulatory protein YeeN (238 aa).

This sequence belongs to the TACO1 family. YeeN subfamily.

It localises to the cytoplasm. This is Probable transcriptional regulatory protein YeeN from Salmonella typhi.